The following is an 843-amino-acid chain: Molybdenum cofactor sulfurase (843 aa).

Lys241 is subject to N6-(pyridoxal phosphate)lysine. Cys405 is a catalytic residue. Residues 657–836 (QYLRKFVMPG…LMVGDIVIPS (180 aa)) enclose the MOSC domain.

The protein belongs to the class-V pyridoxal-phosphate-dependent aminotransferase family. MOCOS subfamily. Requires pyridoxal 5'-phosphate as cofactor.

It catalyses the reaction Mo-molybdopterin + L-cysteine + AH2 = thio-Mo-molybdopterin + L-alanine + A + H2O. Functionally, sulfurates the molybdenum cofactor. Sulfation of molybdenum is essential for xanthine dehydrogenase (XDH) and aldehyde oxidase (ADO) enzymes in which molybdenum cofactor is liganded by 1 oxygen and 1 sulfur atom in active form. This is Molybdenum cofactor sulfurase from Aspergillus fumigatus (strain CBS 144.89 / FGSC A1163 / CEA10) (Neosartorya fumigata).